Consider the following 428-residue polypeptide: Histidine--tRNA ligase (428 aa).

The protein belongs to the class-II aminoacyl-tRNA synthetase family. Homodimer.

The protein localises to the cytoplasm. The enzyme catalyses tRNA(His) + L-histidine + ATP = L-histidyl-tRNA(His) + AMP + diphosphate + H(+). The sequence is that of Histidine--tRNA ligase from Chlamydia trachomatis serovar L2 (strain ATCC VR-902B / DSM 19102 / 434/Bu).